The sequence spans 1522 residues: MADGVTQVDSTGLHSFSPSPSLSSSSSLPAVALSLAVSASAVTASYSISHLPPPPLPPVPTTMAGWIGWVFSFFFQVIPSVLYWIITFSTITLPTWLFTLFSMSLTFTMNFTTLLLIVLAVVSTISWFIRYRFLNMYSRLPPEPQRKEPQVDLFPDVQEGDSKPGLANYLDEFLSAIKVFGYLERPVFHELTRTMQTRKLIAGETLMLEEEKGFCLVVDGLVQIFVKSMRDGKSDTDEELHHLGAESSDEEHHIDGKQGYQLLTEVKNGASMSSLFSILSLFTEDIQLRENESSGSSSSSIALRAARVPNSIPTSPRGVMDSPSLGFQDHSDDTSNMITNGELPSVPPLHLGESRTPPSGDQHHQQHHESRKHSSRKRRKSVHPDIVARAMVDTTIAIIPASAFRRLTRVYPRATAHIVQVILTRLQRVTFATAHSYLGLSNEVLGIEKQMTKFTTYDLPNNMRGAALDRLKDKFIKERDRLGSEEVTKGIALHNPSAGRRRRSSSFLRKDAALQAKLMTPRRAATVVTPESAPAEHDTYGVSPGDLLSTIQSSRFGPRYEQPPAKLQTPLAEKENTHFRLPAMQARHTFRRQDTMDEDGLFRECILDCIMKGIGLTSSTRDALRKSNHSGEASPKLLSYDSRRQKAIFTNNAFGFIDPYEGSGDGETESLMSMSVTSAGGTSPVINLREELRNDIEIVYFPKGSVLVEQGERHPGLYYVIDGFLDVGVPIVDKGEDLVGVSKPAASKGSFPTLKRTTTANSVGAGGTAANDSRRRKQSRKSLYLIKPGGIQGYVGAVASYRSYTDVVAKTDVYVGFLPRASLERIAERYPIALLTLAKRLTSILPRLLLHIDFALEWVQVNAGQVIYRQGDESDAIYLVLNGRLRSVLESPGNKLAVVGEYGQGESVGELEVMTESTRPATLHAIRDTELAKFPRSLFNSLAQEHPGITIQVSKLIAQRMRDLVERPVTEKGVERSNAGSVQTATSTVNLRTVGILPVTAGVPVVEFGNRLLHALHQVGVTNGVTSLNQAAILNHLGRHAFSKMGKLKLSQYLADLEEKYGMVLYIADTNVSSPWTQTCITQADCILLVGLAESSPSIGEYERFLLGMKTTARKELVLLHAERYCPPGLTRRWLKNRVWINGGHHHIQMAFRLTAEPTHPETKRFGTVLKQRVQVLQAEIQKYTSRRIRQTPLYSAQSPFKGDFHRLARRLCGRAVGLVLGGGGARGIAHVGVIKALEEAGIPVDIIGGTSIGSFIGALYARDADVVPMYGRAKKFAGRMGSMWRFALDLTYPTVSYTTGHEFNRGIFKTFGDSQIEDFWLEFYCNTTNISKSRPEYHSSGYVWRYVRASMSLAGLIPPICDEGSMLLDGGYIDNLTVDHMKGLGADVIFAVDVGSIDDNTPQVYGDSLSGFWSVFNRWNPFSSCPNPPTLSEIQARLAYVSSIDNLERAKNIPGCLYMRPPIDGYGTLEFGKFDEIYQVGYAFGKQFLEKLKSEGSLPLPEETEEKKKLQRTLAPRRASI.

The disordered stretch occupies residues 1 to 24 (MADGVTQVDSTGLHSFSPSPSLSS). The Cytoplasmic segment spans residues 1–65 (MADGVTQVDS…LPPVPTTMAG (65 aa)). The segment covering 15–24 (SFSPSPSLSS) has biased composition (low complexity). Residues 66 to 86 (WIGWVFSFFFQVIPSVLYWII) traverse the membrane as a helical segment. Over 87 to 108 (TFSTITLPTWLFTLFSMSLTFT) the chain is Lumenal. Residues 109 to 129 (MNFTTLLLIVLAVVSTISWFI) traverse the membrane as a helical segment. Residues 130–1522 (RYRFLNMYSR…RTLAPRRASI (1393 aa)) lie on the Cytoplasmic side of the membrane. Disordered regions lie at residues 308–384 (VPNS…SVHP), 523–544 (RAAT…GVSP), and 757–776 (TTTA…SRRR). Basic residues predominate over residues 369–381 (ESRKHSSRKRRKS). A nucleoside 3',5'-cyclic phosphate contacts are provided by residues 680–800 (GGTS…AVAS) and 840–960 (RLTS…IAQR). The region spanning 1219-1383 (LVLGGGGARG…IDNLTVDHMK (165 aa)) is the PNPLA domain. A GXGXXG motif is present at residues 1223–1228 (GGGARG). A GXSXG motif is present at residues 1250 to 1254 (GTSIG). S1252 functions as the Nucleophile in the catalytic mechanism. Residue D1370 is the Proton acceptor of the active site. The short motif at 1370 to 1372 (DGG) is the DGA/G element. Residues 1501–1522 (LPEETEEKKKLQRTLAPRRASI) form a disordered region.

This sequence belongs to the NTE family.

The protein localises to the endoplasmic reticulum membrane. The catalysed reaction is a 1-acyl-sn-glycero-3-phosphocholine + H2O = sn-glycerol 3-phosphocholine + a fatty acid + H(+). Inhibited by organophosphorus esters. Its function is as follows. Intracellular phospholipase B that catalyzes the double deacylation of phosphatidylcholine (PC) to glycerophosphocholine (GroPCho). Plays an important role in membrane lipid homeostasis. Responsible for the rapid PC turnover in response to inositol, elevated temperatures, or when choline is present in the growth medium. In Aspergillus fumigatus (strain ATCC MYA-4609 / CBS 101355 / FGSC A1100 / Af293) (Neosartorya fumigata), this protein is Lysophospholipase nte1 (nte1).